The chain runs to 62 residues: Probable tautomerase SH1546 (62 aa).

Residue Pro-2 is the Proton acceptor; via imino nitrogen of the active site.

Belongs to the 4-oxalocrotonate tautomerase family.

The protein is Probable tautomerase SH1546 of Staphylococcus haemolyticus (strain JCSC1435).